A 188-amino-acid polypeptide reads, in one-letter code: Elongation factor P-like protein (188 aa).

The protein belongs to the elongation factor P family.

The protein is Elongation factor P-like protein of Stenotrophomonas maltophilia (strain K279a).